Reading from the N-terminus, the 437-residue chain is GTPase Der (437 aa).

EngA-type G domains follow at residues 4-168 and 178-353; these read NIVA…PEKP and PRFA…ENRK. GTP is bound by residues 10–17, 57–61, 120–123, 184–191, 231–235, and 296–299; these read GRPNVGKS, DTGGY, NKVD, GRPNAGKS, DTAGI, and NKWD. One can recognise a KH-like domain in the interval 354–437; that stretch reads QRISTSKFNE…VPIDIYIREK (84 aa).

Belongs to the TRAFAC class TrmE-Era-EngA-EngB-Septin-like GTPase superfamily. EngA (Der) GTPase family. In terms of assembly, associates with the 50S ribosomal subunit.

Its function is as follows. GTPase that plays an essential role in the late steps of ribosome biogenesis. This is GTPase Der from Flavobacterium johnsoniae (strain ATCC 17061 / DSM 2064 / JCM 8514 / BCRC 14874 / CCUG 350202 / NBRC 14942 / NCIMB 11054 / UW101) (Cytophaga johnsonae).